Consider the following 164-residue polypeptide: Phosphopantetheine adenylyltransferase (164 aa).

Ser9 provides a ligand contact to substrate. Residues 9-10 (SF) and His17 contribute to the ATP site. Positions 41, 73, and 87 each coordinate substrate. ATP contacts are provided by residues 88–90 (GLR), Glu98, and 123–129 (YTFLSSS).

The protein belongs to the bacterial CoaD family. In terms of assembly, homohexamer. It depends on Mg(2+) as a cofactor.

It localises to the cytoplasm. It carries out the reaction (R)-4'-phosphopantetheine + ATP + H(+) = 3'-dephospho-CoA + diphosphate. The protein operates within cofactor biosynthesis; coenzyme A biosynthesis; CoA from (R)-pantothenate: step 4/5. Functionally, reversibly transfers an adenylyl group from ATP to 4'-phosphopantetheine, yielding dephospho-CoA (dPCoA) and pyrophosphate. The chain is Phosphopantetheine adenylyltransferase from Dictyoglomus thermophilum (strain ATCC 35947 / DSM 3960 / H-6-12).